We begin with the raw amino-acid sequence, 153 residues long: SsrA-binding protein (153 aa).

The tract at residues 132 to 153 is disordered; that stretch reads REKDWLRERERVMKHDTRRRSD.

It belongs to the SmpB family.

It is found in the cytoplasm. Required for rescue of stalled ribosomes mediated by trans-translation. Binds to transfer-messenger RNA (tmRNA), required for stable association of tmRNA with ribosomes. tmRNA and SmpB together mimic tRNA shape, replacing the anticodon stem-loop with SmpB. tmRNA is encoded by the ssrA gene; the 2 termini fold to resemble tRNA(Ala) and it encodes a 'tag peptide', a short internal open reading frame. During trans-translation Ala-aminoacylated tmRNA acts like a tRNA, entering the A-site of stalled ribosomes, displacing the stalled mRNA. The ribosome then switches to translate the ORF on the tmRNA; the nascent peptide is terminated with the 'tag peptide' encoded by the tmRNA and targeted for degradation. The ribosome is freed to recommence translation, which seems to be the essential function of trans-translation. In Bordetella avium (strain 197N), this protein is SsrA-binding protein.